We begin with the raw amino-acid sequence, 61 residues long: Ferredoxin-3 (61 aa).

4Fe-4S ferredoxin-type domains follow at residues 2-31 (YKITIDTDKCTGDGECVDVCPVEVYELQDG) and 32-61 (KAVAVNEDECLGCESCVEVCEQDALTVEEN). Cys11 and Cys17 together coordinate [3Fe-4S] cluster. [4Fe-4S] cluster is bound by residues Cys21, Cys41, Cys44, and Cys47. Residue Cys51 coordinates [3Fe-4S] cluster.

It depends on [3Fe-4S] cluster as a cofactor. [4Fe-4S] cluster serves as cofactor.

Functionally, ferredoxins are iron-sulfur proteins that transfer electrons in a wide variety of metabolic reactions. The sequence is that of Ferredoxin-3 from Desulfocurvibacter africanus (Desulfovibrio africanus).